Reading from the N-terminus, the 508-residue chain is Photosystem II CP47 reaction center protein (508 aa).

Helical transmembrane passes span 21-36 (AVHI…WAGS), 101-115 (IVFS…IWHW), 140-156 (GIHL…FGAF), 203-218 (IAAG…FHLS), 237-252 (VLSS…AFVV), and 457-472 (SFAL…HGSR).

Belongs to the PsbB/PsbC family. PsbB subfamily. PSII is composed of 1 copy each of membrane proteins PsbA, PsbB, PsbC, PsbD, PsbE, PsbF, PsbH, PsbI, PsbJ, PsbK, PsbL, PsbM, PsbT, PsbX, PsbY, PsbZ, Psb30/Ycf12, at least 3 peripheral proteins of the oxygen-evolving complex and a large number of cofactors. It forms dimeric complexes. The cofactor is Binds multiple chlorophylls. PSII binds additional chlorophylls, carotenoids and specific lipids..

Its subcellular location is the plastid. The protein localises to the chloroplast thylakoid membrane. Its function is as follows. One of the components of the core complex of photosystem II (PSII). It binds chlorophyll and helps catalyze the primary light-induced photochemical processes of PSII. PSII is a light-driven water:plastoquinone oxidoreductase, using light energy to abstract electrons from H(2)O, generating O(2) and a proton gradient subsequently used for ATP formation. This chain is Photosystem II CP47 reaction center protein, found in Populus trichocarpa (Western balsam poplar).